Consider the following 2711-residue polypeptide: MKMKIQKKEKQLSKLRALNHSPMSDASVNFDYKSPSPFDCSPDQGENIEEAANHCLPHKNLYTTEEEADTLFSRKLTSHNGMEDSGGRGTGVKKKRKKKEPGEQEGTKGSKDREPKPKRKREPKEPKEPRRAKEPKRAKEPKETKQKDGVKKPRKHREASGTKEGKEKRSCTDYGSRTKSKKASREQGPTPVERKKKGKRKNETTVESLELDHSLPNPSLQSPEEPSESADSQKRRSGRQVKRRKYNEDLDFKVVDDDGETIAVLGAGRTSALSASTLAWQAEEPPEDDANIIEKILASKTVQEVHPGEPPFDLELFYVKYRNFSYLHCKWATMEELEKDPRIAQKIKRFRNKQAQMKHIFTEPDEDLFNPDYIEIDRILEVAHTKDAETGEEVTHYLVKWCSLPYEESTWELEEDVDPAKVKEFESLQILPEVKHVERPASDAWQKLETSREYRNSNRLREYQLEGMNWLLFNWYNRKNCILADEMGLGKTIQSIAFLSEIFVRGIHGPFLIIAPLSTITNWEREFRTWTEMNAIVYHGSQISRQMIQQYEMVYRDAQGNPLSGVFKFHVVITTFEMILADCPELKKIHWSCVIIDEAHRLKNRNCKLLEGLKLMALEHKVLLTGTPLQNSVEELFSLLNFLEPSQFPSETAFLEEFGDLKTEEQVKKLQSILKPMMLRRLKDDVEKNLAPKQETIIEVELTNIQKKYYRAILEKNFSFLTKGANQHNMPNLINTMMELRKCCNHPYLINGAEEKILEDFRKAHSSEASDFQLQAMIQAAGKLVLIDKLLPKLIAGGHKVLIFSQMVRCLDILEDYLIQRRYTYERIDGRVRGNLRQAAIDRFCKPDSDRFVFLLCTRAGGLGINLTAADTCIIFDSDWNPQNDLQAQARCHRIGQSKAVKVYRLITRNSYEREMFDKASLKLGLDKAILQDINRKGSTNGVQQLSKMEVEDLLRKGAYGALMDEEDEGSKFCEEDIDQILQRRTHTITIQSEGKGSTFAKASFVASGNRTDISLDDPNFWQKWAKIAELDTEANNEKESLVIDRPRVRKQTKHYNSFEEDELMEFSELDSDSDERPTRSRRLSDRARRYLRAECFRVEKNLLIFGWGRWKDILTHGRFKWPLNEKDMEMICRALLVYCVKHYKGDEKIKSFIWELITPSKDGQVQTLQNHSGLSAPVPRGRKGKKTKNQLLLPELKNADWLATCNPEVVLHDDGYKKHLKQHCNKVLLRVRMLYYLKAEILGEAADKAFEGTPARELDVLLPDIDYVEIPVDWWDAEADKSLLIGVFKHGYERYNAMRADPALCFLEKVGMPDEKSLSAEQGVTDGTSDIPERGNIDKEDSAEDKLDGLQKQTASPSDGSDGIFGEKKDDSQAAQDGSDPDKSPWPVSSALTARLRRLVTIYQRCNRKELCRPEILGPGNQGYWVQEEVFRRTSEMDLINKEAQKRWTRREQADFYRTVSSFGVVYDQEKKAFDWTQFRIISRLDKKSDESLEHYFYSFVAMCRNVCRLPAWKDDGPPDASIYVEPITEERAAKTLYRIELLRKVREQVLMCPQLHERLQLCRPSLYLPVWWECGKHDRDLLIGTAKHGLNRTDYYIMNDPQLSFLDAYRNYAQHKRTDTQAPGSLCCLYQSNSKLYESLTYTPVSRTSESLESEPENLMRMESRDDHLCLPEGGLPDITCENFVSKVQEVISLDHDENLLPESLENMIYGKTGLSQEPHSFQEAPTTNTQSRKNTITISASRNESCQPPGIEAEITSASSLMSSLEAGVAKMNIKNGKHLLVSISKEGEPCCSETGRRPETIGHREAKCLVSPTLDTGHESGFVDLCSLSVYDPKRNFSSDQQLIDLLENKSLESKLILNQSDEEEEENEDETLAIVASATEKPEVLDFPKPTVNIPRGKNLSFHQDEAKKGRLEVVSKTAGPQRVFPPPANQCHCKHIERWAHGLGSEDSEVEKPKAYQPDLYRSKANNSTVEGETAVIPTEPFKLKHELLKEPWKESSEGGKSFSMYAPEGSEPKPEDMDFENKDDYEKDGTCLSQDYPGKYSEEESKSSASGIAGDLGEEAQEVRAPTIAQLLQEKTLYSFSEWPKDRVIINRLDNICHVVLKGKWPCSHQYEPSGALPTPVLSSSAGSRSSLSEPEATEHGFSNGAALAAQIQKESFLAPVFTKDEQKHRRPYEFEVERDAKARSLEEYSATHGRPPIVLNGWHGESAIDLSCSSEGSPGATSPFPVSASTPKIGAISSLQGALGMDLSGILQAGLIHPVTGQIVNGSLRRDDAAMRRRRGRRKHIEGGMDLIFLKEQTLQAGILEVHEDAGQTTLSTTHPEVPGATSSAPEPTAAASSQAEKAVPSKSLLDWLRQQADYSLDVPGFGTSFSDKPKQRRPRCKEPGKLDISSLGGEERVPAVPKEPGLRGFLPESKFNHTLAEPVLRDAGPRRRGRRPRNELLKAPAIVADSPSGMGPLFMNGLIAGMDLVGLQNVRNIPGIPLTGLVGFPAGFATMPTGEEVKNTLSMLPMMLPGMAAVPQMFGVGGLLNTPMATTCTTTASASLASTKSGTSATEKSTEDKLSGHDVNTDALVDDKPGPSPFSDQSEPTITTSSPVAFNPFLIPGVSPGLIYPSMFLSPGMGMALPAMQQARHSEMVGLETQKRKKKKTKGDSPTQEPASVCEKEPGSDQNCTESSATVSPEREHVAQAREEGLKDSNEDTN.

4 stretches are compositionally biased toward basic and acidic residues: residues 1-12 (MKMKIQKKEKQL), 100-115 (EPGEQEGTKGSKDREP), 122-151 (EPKEPKEPRRAKEPKRAKEPKETKQKDGVK), and 158-171 (EASGTKEGKEKRSC). 2 disordered regions span residues 1 to 52 (MKMK…EEAA) and 66 to 243 (EEAD…QVKR). The required for DNA-dependent ATPase activity stretch occupies residues 1 to 746 (MKMKIQKKEK…MMELRKCCNH (746 aa)). The span at 214-224 (SLPNPSLQSPE) shows a compositional bias: low complexity. Chromo domains are found at residues 291-342 (NIIE…KDPR) and 374-438 (IEID…KHVE). Residues 472 to 646 (LFNWYNRKNC…FSLLNFLEPS (175 aa)) enclose the Helicase ATP-binding domain. Residue 485–492 (DEMGLGKT) coordinates ATP. Residues 597 to 600 (DEAH) carry the DEAH box motif. One can recognise a Helicase C-terminal domain in the interval 786–955 (LIDKLLPKLI…LSKMEVEDLL (170 aa)). The interval 1318 to 1389 (SLSAEQGVTD…SDPDKSPWPV (72 aa)) is disordered. The segment covering 1320-1329 (SAEQGVTDGT) has biased composition (polar residues). Positions 1332 to 1350 (IPERGNIDKEDSAEDKLDG) are enriched in basic and acidic residues. A Myb-like domain is found at 1448–1502 (RWTRREQADFYRTVSSFGVVYDQEKKAFDWTQFRIISRLDKKSDESLEHYFYSFV). At Ser1865 the chain carries Phosphoserine. Disordered regions lie at residues 1951–1978 (SEDSEVEKPKAYQPDLYRSKANNSTVEG), 1997–2059 (EPWK…ASGI), 2124–2147 (LPTPVLSSSAGSRSSLSEPEATEH), 2321–2350 (TTLSTTHPEVPGATSSAPEPTAAASSQAEK), 2373–2419 (GFGT…RGFL), 2550–2602 (SASL…ITTS), and 2641–2711 (RHSE…EDTN). Positions 2017-2036 (SEPKPEDMDFENKDDYEKDG) are enriched in basic and acidic residues. 2 stretches are compositionally biased toward low complexity: residues 2130–2140 (SSSAGSRSSLS) and 2333–2349 (ATSSAPEPTAAASSQAE). Low complexity predominate over residues 2550-2563 (SASLASTKSGTSAT). A compositionally biased stretch (basic and acidic residues) spans 2565–2586 (KSTEDKLSGHDVNTDALVDDKP). 2 stretches are compositionally biased toward polar residues: residues 2591 to 2602 (FSDQSEPTITTS) and 2677 to 2688 (SDQNCTESSATV). Over residues 2690-2711 (PEREHVAQAREEGLKDSNEDTN) the composition is skewed to basic and acidic residues.

The protein belongs to the SNF2/RAD54 helicase family. Interacts with NFE2L2; involved in activation of the transcription. Widely expressed.

It is found in the nucleus. It localises to the nucleoplasm. The catalysed reaction is ATP + H2O = ADP + phosphate + H(+). In terms of biological role, ATP-dependent chromatin-remodeling factor. Regulates transcription by disrupting nucleosomes in a largely non-sliding manner which strongly increases the accessibility of chromatin. Activates transcription of specific genes in response to oxidative stress through interaction with NFE2L2. This Mus musculus (Mouse) protein is Chromodomain-helicase-DNA-binding protein 6 (Chd6).